The primary structure comprises 1400 residues: Bromodomain-containing protein 4 (1400 aa).

The interval 1–58 (MSTESGPGTRLRNLPVMGDGLETSQMSTTQAQAQPQPANAASTNPPPPETSNPNKPKR) is disordered. Residues 23 to 43 (TSQMSTTQAQAQPQPANAAST) show a composition bias toward low complexity. In terms of domain architecture, Bromo 1 spans 58 to 164 (RQTNQLQYLL…KLFLQKINEL (107 aa)). Residue Lys-99 forms a Glycyl lysine isopeptide (Lys-Gly) (interchain with G-Cter in SUMO2) linkage. Disordered regions lie at residues 176-353 (AKGR…KISE) and 461-616 (EPEE…YEEK). The span at 197-212 (PNTTQASTSPQTQTPQ) shows a compositional bias: low complexity. The segment covering 244–267 (PPQPLQTPSPVPPQPPPPPAPVPQ) has biased composition (pro residues). Basic and acidic residues predominate over residues 321–337 (PRRESSRPVKPPKKDVP). Residues 349–458 (SKISEQLKCC…DVFEMRFAKM (110 aa)) enclose the Bromo 2 domain. Ser-471 carries the phosphoserine modification. The span at 479–498 (KVVAPPSSSDSSSDSSSDSD) shows a compositional bias: low complexity. Ser-485, Ser-489, and Ser-493 each carry phosphoserine; by CK2. The NPS region stretch occupies residues 485–504 (SSSDSSSDSSSDSDSSTDDS). Residue Ser-495 is modified to Phosphoserine. A phosphoserine; by CK2 mark is found at Ser-499, Ser-500, and Ser-504. The BID region stretch occupies residues 525 to 580 (QLAALSQPQQNKPKKKEKDKKEKKKEKHKKKEEVEENKKSKTKELPPKKTKKNNSS). Residues 536 to 554 (KPKKKEKDKKEKKKEKHKK) are compositionally biased toward basic residues. Positions 555 to 571 (KEEVEENKKSKTKELPP) are enriched in basic and acidic residues. A Glycyl lysine isopeptide (Lys-Gly) (interchain with G-Cter in SUMO2) cross-link involves residue Lys-586. An NET domain is found at 601–683 (ESEEEDKCKP…SCLRKKRKPQ (83 aa)). Ser-602 carries the phosphoserine modification. The segment covering 606-616 (DKCKPMSYEEK) has biased composition (basic and acidic residues). Residues Lys-646 and Lys-695 each participate in a glycyl lysine isopeptide (Lys-Gly) (interchain with G-Cter in SUMO2) cross-link. A disordered region spans residues 675-1125 (CLRKKRKPQA…GCPPASPAAV (451 aa)). The span at 700–713 (SSSESESTSESSSS) shows a compositional bias: low complexity. Over residues 725 to 745 (KSKKKGHTGRDQKKHHHHHHP) the composition is skewed to basic residues. Pro residues-rich tracts occupy residues 748–787 (QPAPAPVPQQPPPPPQQPPPPPPPQQQQQQPPPPPPPPSM), 835–848 (PELPPHLPQPPEHS), 883–892 (PPKPTRPPAV), and 900–909 (PLLPQPPMAQ). Positions 928–938 (MQMQLYLQQLQ) are enriched in low complexity. Composition is skewed to pro residues over residues 955–966 (QPPPPLPPPPHP), 975–1000 (PQPPPPPPPQPQPPPQQQHQPPPRPV), and 1013–1037 (QPPPPPGQQPTHPPPGQQPPPPQPA). The C-terminal (CTD) region stretch occupies residues 1050–1400 (RHHKSDPYSA…LLSIFEENLF (351 aa)). A Glycyl lysine isopeptide (Lys-Gly) (interchain with G-Cter in SUMO2) cross-link involves residue Lys-1053. The segment covering 1075–1084 (QMPQFQSLTH) has biased composition (polar residues). The segment covering 1085–1095 (QSPPQQNVQPK) has biased composition (low complexity). Lys-1147 bears the N6-acetyllysine; alternate mark. A Glycyl lysine isopeptide (Lys-Gly) (interchain with G-Cter in SUMO1); alternate cross-link involves residue Lys-1147. A Glycyl lysine isopeptide (Lys-Gly) (interchain with G-Cter in SUMO2); alternate cross-link involves residue Lys-1147. A phosphoserine mark is found at Ser-1153 and Ser-1162. Residues 1155–1377 (IIRSEPFSTS…KREQERRRRE (223 aa)) are disordered. Positions 1211–1232 (PDKDKQKQEPKTPVAPKKDLKI) are enriched in basic and acidic residues. A Glycyl lysine isopeptide (Lys-Gly) (interchain with G-Cter in SUMO2) cross-link involves residue Lys-1233. A phosphoserine mark is found at Ser-1237 and Ser-1240. The segment covering 1247-1258 (TTPSSTAKSSSD) has biased composition (low complexity). Residues 1259–1320 (SFEHFRRAAR…AHEEARRRQE (62 aa)) are compositionally biased toward basic and acidic residues. Positions 1321-1357 (QQQQQQQQRQEQQQQQQQAAAVAAASAPQAQSSQPQS) are enriched in low complexity. A compositionally biased stretch (basic and acidic residues) spans 1361–1377 (QQRELARKREQERRRRE).

Belongs to the BET family. In terms of assembly, binds acetylated histone H4. Interacts with p53/TP53; the interaction is direct. Interacts (via CTD region) with CDK9 and CCNT1, acting as an associated component of P-TEFb complex. Interacts with RELA (when acetylated at 'Lys-310'). Interacts (via NET domain) with NSD3, CHD4, BICRA and ATAD5. The interaction with BICRA bridges BRD4 to the GBAF complex. Interacts (via NET domain) with JMJD6 (via JmjC and N-terminal domains); the interaction is stronger in presence of ssRNA and recruits JMJD6 on distal enhancers. Interacts with NSD3. Interacts with NIPBL. Post-translationally, phosphorylation by CK2 disrupt the intramolecular binding between the bromo domain 2 and the NPS region and promotes binding between the NPS and the BID regions, leading to activate the protein and promote binding to acetylated histones. In absence of phosphorylation, BRD4 does not localize to p53/TP53 target gene promoters, phosphorylation promoting recruitment to p53/TP53 target promoters.

It is found in the nucleus. Its subcellular location is the chromosome. Chromatin reader protein that recognizes and binds acetylated histones and plays a key role in transmission of epigenetic memory across cell divisions and transcription regulation. Remains associated with acetylated chromatin throughout the entire cell cycle and provides epigenetic memory for postmitotic G1 gene transcription by preserving acetylated chromatin status and maintaining high-order chromatin structure. During interphase, plays a key role in regulating the transcription of signal-inducible genes by associating with the P-TEFb complex and recruiting it to promoters. Also recruits P-TEFb complex to distal enhancers, so called anti-pause enhancers in collaboration with JMJD6. BRD4 and JMJD6 are required to form the transcriptionally active P-TEFb complex by displacing negative regulators such as HEXIM1 and 7SKsnRNA complex from P-TEFb, thereby transforming it into an active form that can then phosphorylate the C-terminal domain (CTD) of RNA polymerase II. Regulates differentiation of naive CD4(+) T-cells into T-helper Th17 by promoting recruitment of P-TEFb to promoters. Promotes phosphorylation of 'Ser-2' of the C-terminal domain (CTD) of RNA polymerase II. According to a report, directly acts as an atypical protein kinase and mediates phosphorylation of 'Ser-2' of the C-terminal domain (CTD) of RNA polymerase II; these data however need additional evidences in vivo. In addition to acetylated histones, also recognizes and binds acetylated RELA, leading to further recruitment of the P-TEFb complex and subsequent activation of NF-kappa-B. Also acts as a regulator of p53/TP53-mediated transcription: following phosphorylation by CK2, recruited to p53/TP53 specific target promoters. This is Bromodomain-containing protein 4 (Brd4) from Mus musculus (Mouse).